The primary structure comprises 338 residues: RNA 3'-terminal phosphate cyclase (338 aa).

ATP is bound by residues glutamine 103 and 283 to 287; that span reads YLADQ. Catalysis depends on histidine 308, which acts as the Tele-AMP-histidine intermediate.

This sequence belongs to the RNA 3'-terminal cyclase family. Type 1 subfamily.

The protein localises to the cytoplasm. The catalysed reaction is a 3'-end 3'-phospho-ribonucleotide-RNA + ATP = a 3'-end 2',3'-cyclophospho-ribonucleotide-RNA + AMP + diphosphate. Its function is as follows. Catalyzes the conversion of 3'-phosphate to a 2',3'-cyclic phosphodiester at the end of RNA. The mechanism of action of the enzyme occurs in 3 steps: (A) adenylation of the enzyme by ATP; (B) transfer of adenylate to an RNA-N3'P to produce RNA-N3'PP5'A; (C) and attack of the adjacent 2'-hydroxyl on the 3'-phosphorus in the diester linkage to produce the cyclic end product. The biological role of this enzyme is unknown but it is likely to function in some aspects of cellular RNA processing. The sequence is that of RNA 3'-terminal phosphate cyclase from Escherichia coli O17:K52:H18 (strain UMN026 / ExPEC).